The sequence spans 315 residues: Ribosomal RNA small subunit methyltransferase H (315 aa).

S-adenosyl-L-methionine contacts are provided by residues 37-39 (GGH), Asp-57, Phe-83, Asp-105, and Gln-112. The interval 296–315 (EVKANPRSRSAVMRVAEKVR) is disordered.

The protein belongs to the methyltransferase superfamily. RsmH family.

It localises to the cytoplasm. It catalyses the reaction cytidine(1402) in 16S rRNA + S-adenosyl-L-methionine = N(4)-methylcytidine(1402) in 16S rRNA + S-adenosyl-L-homocysteine + H(+). In terms of biological role, specifically methylates the N4 position of cytidine in position 1402 (C1402) of 16S rRNA. The chain is Ribosomal RNA small subunit methyltransferase H from Stutzerimonas stutzeri (strain A1501) (Pseudomonas stutzeri).